A 984-amino-acid polypeptide reads, in one-letter code: Mast/stem cell growth factor receptor Kit (984 aa).

The N-terminal stretch at 1–21 is a signal peptide; that stretch reads MEYHWILLCVSLCFTFHPGDT. The Extracellular portion of the chain corresponds to 22 to 514; that stretch reads KPTITPAGTY…RTISHDLFSP (493 aa). 5 Ig-like C2-type domains span residues 23–97, 98–197, 203–300, 311–395, and 398–498; these read PTIT…ERAS, IYIY…LTVR, PPVI…VWLD, PVNN…ASVN, and FTIF…QAFT. Intrachain disulfides connect C44–C87, C129–C178, C144–C175, and C226–C284. N-linked (GlcNAc...) asparagine glycans are attached at residues N227, N260, N314, N351, N395, N448, and N476. An intrachain disulfide couples C421 to C487. The chain crosses the membrane as a helical span at residues 515–535; sequence LLIGSVSAACILCLILIVLFY. Residues 536 to 984 are Cytoplasmic-facing; the sequence is KYMQKPKYQI…GTEPFRVQRV (449 aa). Y558 contacts Mg(2+). A phosphotyrosine; by autocatalysis mark is found at Y558 and Y560. The region spanning 579–926 is the Protein kinase domain; that stretch reads LRFGKTLGSG…LSDTTKHIYL (348 aa). ATP is bound by residues 586–593, K613, and 661–667; these read GSGAFGKV and EYCCFGD. Y690 and Y707 each carry phosphotyrosine; by autocatalysis. The span at 711-723 shows a compositional bias: low complexity; that stretch reads RPSAAGKPSSSSS. A disordered region spans residues 711–749; it reads RPSAAGKPSSSSSSEKRRSLREGSPYVEEDSESEMFDED. Residues 737–749 are compositionally biased toward acidic residues; it reads VEEDSESEMFDED. D781 (proton acceptor) is an active-site residue. Residue R785 coordinates ATP. The Mg(2+) site is built by N786 and D799. A phosphotyrosine; by autocatalysis mark is found at Y812 and Y925. The segment at 936 to 963 is disordered; the sequence is PRGREESSTHSMASQPFNSAGNNSPPSR. Over residues 944–960 the composition is skewed to polar residues; it reads THSMASQPFNSAGNNSP.

Belongs to the protein kinase superfamily. Tyr protein kinase family. CSF-1/PDGF receptor subfamily. Post-translationally, ubiquitinated. Rapidly ubiquitinated after autophosphorylation induced by kitlg/scf binding, leading to internalization and degradation. In terms of processing, autophosphorylated on tyrosine residues. Phosphorylated tyrosine residues are important for interaction with specific binding partners.

The protein localises to the cell membrane. It carries out the reaction L-tyrosyl-[protein] + ATP = O-phospho-L-tyrosyl-[protein] + ADP + H(+). Tyrosine-protein kinase that acts as a cell-surface receptor for the cytokine kitlg/scf and plays an essential role in the regulation of cell survival and proliferation, hematopoiesis, stem cell maintenance, gametogenesis, mast cell development, migration and function, and in melanogenesis. The polypeptide is Mast/stem cell growth factor receptor Kit (kit) (Takifugu rubripes (Japanese pufferfish)).